The primary structure comprises 217 residues: MQFFIDTANIDEIKQAIDWGILDGVTTNPTLAAKTGRPFMDVVKDILSIVDGPVSLETVSLDTEGMVKEGRFLAELGDNVVVKIPMTKEGMKAVNILEEEGIPTNVTLIFSPMQALIAAKAGASYVSPFIGRLDDISTDGMNLVRDIRTIFDNYGYETEIIAASIRHPIHVLEAAKAGADIATIPFNVLEALFRHPLTDIGIDKFLKDWEKVPNKPF.

Catalysis depends on lysine 83, which acts as the Schiff-base intermediate with substrate.

Belongs to the transaldolase family. Type 3B subfamily.

Its subcellular location is the cytoplasm. It carries out the reaction D-sedoheptulose 7-phosphate + D-glyceraldehyde 3-phosphate = D-erythrose 4-phosphate + beta-D-fructose 6-phosphate. It participates in carbohydrate degradation; pentose phosphate pathway; D-glyceraldehyde 3-phosphate and beta-D-fructose 6-phosphate from D-ribose 5-phosphate and D-xylulose 5-phosphate (non-oxidative stage): step 2/3. In terms of biological role, transaldolase is important for the balance of metabolites in the pentose-phosphate pathway. The sequence is that of Probable transaldolase from Hydrogenobaculum sp. (strain Y04AAS1).